Reading from the N-terminus, the 144-residue chain is Small ribosomal subunit protein bS6 (144 aa).

Residues 95-144 (PVTTPSPMMQDDKSKPDENSRGTAAPTVNVADDSASGAQVVAAEENDTQS) are disordered. Residues 104–114 (QDDKSKPDENS) are compositionally biased toward basic and acidic residues.

This sequence belongs to the bacterial ribosomal protein bS6 family.

Binds together with bS18 to 16S ribosomal RNA. This chain is Small ribosomal subunit protein bS6, found in Nitrosomonas eutropha (strain DSM 101675 / C91 / Nm57).